The sequence spans 298 residues: Aspartate carbamoyltransferase catalytic subunit (298 aa).

The carbamoyl phosphate site is built by R50 and T51. K79 is a binding site for L-aspartate. Residues R100, H128, and Q131 each contribute to the carbamoyl phosphate site. Residues R160 and R221 each contribute to the L-aspartate site. Carbamoyl phosphate-binding residues include L260 and P261.

It belongs to the aspartate/ornithine carbamoyltransferase superfamily. ATCase family. Heterooligomer of catalytic and regulatory chains.

The enzyme catalyses carbamoyl phosphate + L-aspartate = N-carbamoyl-L-aspartate + phosphate + H(+). The protein operates within pyrimidine metabolism; UMP biosynthesis via de novo pathway; (S)-dihydroorotate from bicarbonate: step 2/3. In terms of biological role, catalyzes the condensation of carbamoyl phosphate and aspartate to form carbamoyl aspartate and inorganic phosphate, the committed step in the de novo pyrimidine nucleotide biosynthesis pathway. This chain is Aspartate carbamoyltransferase catalytic subunit, found in Methanospirillum hungatei JF-1 (strain ATCC 27890 / DSM 864 / NBRC 100397 / JF-1).